The following is a 370-amino-acid chain: Gametogenetin-binding protein 1 (370 aa).

Disordered stretches follow at residues 26–114 and 240–263; these read VGSK…QTLT and PAAP…EEAV. Residues 31–49 show a composition bias toward polar residues; sequence GSKSTNKPLTRSQPSSSWE. The segment at 225–370 is required for induction of mitochondrial fragmentation; that stretch reads LYKQLQKSAM…DEMGNWPPPD (146 aa). The span at 250 to 260 shows a compositional bias: basic and acidic residues; sequence GLPHEEKGERE. An interaction with GGN region spans residues 298–370; that stretch reads KKFRSTDTVG…DEMGNWPPPD (73 aa).

As to quaternary structure, interacts with CCDC159. Interacts with isoform 1 and isoform 2 of GGN. As to expression, testis-specific. In the testis, expressed only in germ cells and not in somatic cells. Expression starts in late primary spermatocytes in stage X-XII tubules and gradually increases towards step 1-3 spermatids in stage I-III tubules. Expression then declines continuously and disappears after step 7 spermatids in stage VII tubules (at protein level).

The protein resides in the cytoplasm. It localises to the membrane. Its subcellular location is the golgi apparatus. The protein localises to the mitochondrion intermembrane space. Its function is as follows. Induces mitochondrial fragmentation, possibly by promoting DNM1L-dependent fission and may play a role in mitochondrial morphogenesis during spermatogenesis. This Mus musculus (Mouse) protein is Gametogenetin-binding protein 1 (Ggnbp1).